Consider the following 204-residue polypeptide: Recombination protein RecR (204 aa).

A C4-type zinc finger spans residues 58-75; it reads CSICQNVTDRGDDPCSIC. Residues 83–181 form the Toprim domain; sequence SKICVVESPP…EVTKIARGIP (99 aa).

This sequence belongs to the RecR family.

In terms of biological role, may play a role in DNA repair. It seems to be involved in an RecBC-independent recombinational process of DNA repair. It may act with RecF and RecO. The sequence is that of Recombination protein RecR from Chlorobium phaeobacteroides (strain BS1).